A 963-amino-acid chain; its full sequence is Spliceosome associated factor 3, U4/U6 recycling protein (963 aa).

The segment covering 1–11 (MATAAATSASE) has biased composition (low complexity). Disordered regions lie at residues 1–36 (MATA…RTRR) and 49–86 (KTMG…YEWE). A2 bears the N-acetylalanine mark. The mediates interaction with PRPF3 stretch occupies residues 2 to 351 (ATAAATSASE…LVPDLWIRYS (350 aa)). Residues S10 and S16 each carry the phosphoserine modification. Positions 14 to 23 (AESKAGPKAD) are enriched in basic and acidic residues. Residues 21 to 46 (KADGEEDEVKAARTRRKVLSRAVAAA) are a coiled coil. Residues 57-69 (QQEEGVSESDGDE) are compositionally biased toward acidic residues. Positions 82 to 110 (EYEWEYDEEEEKNQLEIERLEEQLSINVY) form a coiled coil. 8 HAT repeats span residues 126–158 (GELT…DEIS), 164–195 (LDRE…YSVG), 201–237 (GGLE…FESA), 242–275 (ARLE…WSED), 324–356 (GDPA…YLDR), 359–391 (KVKD…AMER), 394–430 (VDHQ…YLRR), and 487–520 (NNMQ…LERA). Position 215 is a phosphoserine (S215). Residues 487–520 (NNMQKARELWDSIMTRGNAKYANMWLEYYNLERA) form a required for interaction with USP4 region. The necessary and sufficient for U6 snRNA binding stretch occupies residues 537-953 (CTSDYPEHVC…AATEAPKMSN (417 aa)). Residues 559-619 (LEDWDIAVQK…ALKKKKKIRG (61 aa)) are a coiled coil. A required for nuclear localization region spans residues 600-670 (QRKRARAEKK…EVAPGPAGKC (71 aa)). A Nuclear localization signal motif is present at residues 601–608 (RKRARAEK). A compositionally biased stretch (basic and acidic residues) spans 608-619 (KKALKKKKKIRG). The disordered stretch occupies residues 608-712 (KKALKKKKKI…SITVFVSNLP (105 aa)). The span at 620–635 (PEKRGADEDDEKEWGD) shows a compositional bias: basic residues. Acidic residues predominate over residues 644–657 (RRRVENSIPAAGET). A Phosphoserine modification is found at S650. A Phosphothreonine modification is found at T657. A compositionally biased stretch (basic and acidic residues) spans 695-712 (VLHDSSKDSITVFVSNLP). The 79-residue stretch at 704 to 782 (ITVFVSNLPY…RPMFVSPCVD (79 aa)) folds into the RRM 1 domain. Phosphoserine occurs at positions 769, 795, and 852. Residues 801–878 (HKLFISGLPF…NVIKVAISNP (78 aa)) enclose the RRM 2 domain. Residues 900 to 909 (PQTYGARGKG) are compositionally biased toward basic and acidic residues. R906 is subject to Omega-N-methylarginine.

Component of the 7SK snRNP complex at least composed of P-TEFb (composed of CDK9 and CCNT1/cyclin-T1), HEXIM1, HEXIM2, BCDIN3, SART3 proteins and 7SK and U6 snRNAs. Interacts with AGO1 and AGO2. Interacts with PRPF3 and USP4; the interaction with PRPF3 is direct and recruits USP4 to its substrate PRPF3. Interacts with USP15; the interaction is direct.

The protein localises to the nucleus. Its subcellular location is the nucleoplasm. It localises to the cajal body. The protein resides in the nucleus speckle. It is found in the cytoplasm. Functionally, U6 snRNP-binding protein that functions as a recycling factor of the splicing machinery. Promotes the initial reassembly of U4 and U6 snRNPs following their ejection from the spliceosome during its maturation. Also binds U6atac snRNPs and may function as a recycling factor for U4atac/U6atac spliceosomal snRNP, an initial step in the assembly of U12-type spliceosomal complex. The U12-type spliceosomal complex plays a role in the splicing of introns with non-canonical splice sites. May also function as a substrate-targeting factor for deubiquitinases like USP4 and USP15. Recruits USP4 to ubiquitinated PRPF3 within the U4/U5/U6 tri-snRNP complex, promoting PRPF3 deubiquitination and thereby regulating the spliceosome U4/U5/U6 tri-snRNP spliceosomal complex disassembly. May also recruit the deubiquitinase USP15 to histone H2B and mediate histone deubiquitination, thereby regulating gene expression and/or DNA repair. May play a role in hematopoiesis probably through transcription regulation of specific genes including MYC. The polypeptide is Spliceosome associated factor 3, U4/U6 recycling protein (Pongo abelii (Sumatran orangutan)).